The sequence spans 91 residues: Putative regulatory protein Tlet_1629 (91 aa).

It belongs to the RemA family.

The sequence is that of Putative regulatory protein Tlet_1629 from Pseudothermotoga lettingae (strain ATCC BAA-301 / DSM 14385 / NBRC 107922 / TMO) (Thermotoga lettingae).